Here is a 1211-residue protein sequence, read N- to C-terminus: Transient receptor potential cation channel subfamily A member 1 homolog (1211 aa).

Over 1–811 (MSKKSLGLDV…LKYKWNRLGR (811 aa)) the chain is Cytoplasmic. 17 ANK repeats span residues 49–79 (NLRS…AVNA), 83–112 (DFMT…LPNT), 116–169 (EGDT…EIDP), 173–202 (YQLT…DVDA), 206–235 (NKMT…NVTK), 239–270 (RLNT…AIKA), 277–306 (EKKT…KNSC), 311–340 (REKE…NKNE), 344–374 (VKAV…NIDV), 378–407 (QGLT…NLTI), 411–440 (DERT…KKNK), 473–502 (DQNT…SITQ), 506–535 (DEET…RLLL), 540–569 (MGNS…DKEA), 573–602 (YQKT…QIES), 605–634 (DTKT…TIDR), and 638–669 (EGKT…NLMI). The chain crosses the membrane as a helical span at residues 812–832 (PMYYFALFMYLVFIVSLTQYV). At 833-870 (RHTKAPYNVWNEESYYDSEYFDENETCPQINTTKPDVV) the chain is on the extracellular side. Asn856 and Asn863 each carry an N-linked (GlcNAc...) asparagine glycan. Residues 871–891 (WKIIIQTLAVCQILVECFQLF) form a helical membrane-spanning segment. At 892 to 894 (QRK) the chain is on the cytoplasmic side. Residues 895-915 (FAYLVNWENWIDCFIYSTALI) form a helical membrane-spanning segment. The Extracellular segment spans residues 916 to 932 (TVYDFSECSATSGVRQN). The helical transmembrane segment at 933 to 953 (WQWILAALCIFFGWINLLFMI) threads the bilayer. Residues 954–975 (RKMPRFGIFVVMFVDIVKTFFR) are Cytoplasmic-facing. The helical transmembrane segment at 976–996 (FFPVFVLFIIAFSSSFYVILQ) threads the bilayer. The Extracellular segment spans residues 997 to 1004 (NRPEFSTI). An intramembrane region (pore-forming) is located at residues 1005-1025 (FMSPLKTTVMMIGEFEFTGIF). Residues 1026 to 1048 (HGDETTHAEKMFGPAHTAVACAL) are Extracellular-facing. The chain crosses the membrane as a helical span at residues 1049–1069 (FFFFCIIMTILLMNLLVGLAV). At 1070–1193 (DDIKGVQEKA…EKQVRLEAII (124 aa)) the chain is on the cytoplasmic side. Residues 1149–1191 (EMYEREAEFTSEMTQKLQNQAAKLKNIQENIDVMYEKQVRLEA) are a coiled coil.

The protein belongs to the transient receptor (TC 1.A.4) family. In terms of assembly, homotetramer. As to expression, expressed in many sensory neurons, including OLQ and IL1 neurons.

The protein localises to the cell membrane. Functionally, receptor-activated non-selective cation channel involved in the nose-touch response and foraging behavior. Contributes to the neural responses of sensory neurons to touch, particularly after repeated mechanical stimulation. Has no apparent role in thermosensory or chemosensory behaviors. In Caenorhabditis elegans, this protein is Transient receptor potential cation channel subfamily A member 1 homolog (trpa-1).